The sequence spans 319 residues: 4-diphosphocytidyl-2-C-methyl-D-erythritol kinase (319 aa).

The active site involves Lys-21. 106–116 serves as a coordination point for ATP; that stretch reads PIGAGLAGGSS. The active site involves Asp-148.

It belongs to the GHMP kinase family. IspE subfamily.

It catalyses the reaction 4-CDP-2-C-methyl-D-erythritol + ATP = 4-CDP-2-C-methyl-D-erythritol 2-phosphate + ADP + H(+). Its pathway is isoprenoid biosynthesis; isopentenyl diphosphate biosynthesis via DXP pathway; isopentenyl diphosphate from 1-deoxy-D-xylulose 5-phosphate: step 3/6. Catalyzes the phosphorylation of the position 2 hydroxy group of 4-diphosphocytidyl-2C-methyl-D-erythritol. This is 4-diphosphocytidyl-2-C-methyl-D-erythritol kinase from Prochlorococcus marinus (strain MIT 9303).